We begin with the raw amino-acid sequence, 1238 residues long: Receptor-type tyrosine-protein phosphatase eta (1238 aa).

A signal peptide spans 1–28; sequence MKPAARETRTPPRSPGLRWALLPLLLLL. Over 29–876 the chain is Extracellular; the sequence is RQGQVLCAGA…LPQDPGVICG (848 aa). The 84-residue stretch at 39 to 122 folds into the Fibronectin type-III 1 domain; sequence APNPIFDIEA…LNKTITTEPW (84 aa). N-linked (GlcNAc...) asparagine glycans are attached at residues asparagine 62, asparagine 78, asparagine 85, asparagine 90, asparagine 110, asparagine 114, asparagine 145, asparagine 164, asparagine 173, asparagine 182, asparagine 198, asparagine 207, asparagine 244, asparagine 253, asparagine 267, asparagine 278, asparagine 313, asparagine 317, asparagine 333, asparagine 366, asparagine 379, asparagine 398, asparagine 403, asparagine 437, asparagine 452, asparagine 488, asparagine 506, asparagine 538, asparagine 572, asparagine 576, asparagine 662, asparagine 668, asparagine 685, asparagine 691, asparagine 725, asparagine 811, and asparagine 838. Residues 170–266 enclose the Fibronectin type-III 2 domain; it reads PGTNNSFAFP…GQPRNKVFKT (97 aa). 6 consecutive Fibronectin type-III domains span residues 270–358, 359–443, 444–527, 528–621, 622–718, and 717–803; these read QVSD…SPDQ, VSDF…TDPS, AVTD…TQYT, RPSS…TEPE, PVTS…TDPP, and PPTP…SEVL. A helical transmembrane segment spans residues 877 to 897; that stretch reads AVFGCIFGALAITAVGGFIFW. At 898-1238 the chain is on the cytoplasmic side; the sequence is RKKRTDAKNN…MFGKTNGYIA (341 aa). At serine 910 the chain carries Phosphoserine. One can recognise a Tyrosine-protein phosphatase domain in the interval 942–1199; the sequence is FAEEYEDLKL…VFLNQCVLDI (258 aa). Substrate-binding positions include aspartate 1106, 1140–1146, and glutamine 1184; that span reads CSAGVGR. Cysteine 1140 acts as the Phosphocysteine intermediate in catalysis.

Belongs to the protein-tyrosine phosphatase family. Receptor class 3 subfamily. Monomer. Interacts with CTNNB1 (phosphorylated) and JUP (phosphorylated). Interacts with FLT3 (phosphorylated). Interacts with GAB1 and GRB2. In terms of tissue distribution, expressed at high levels in brain, kidney, spleen and intestine, and at lower levels in liver, lung, thymus and heart. Expressed at a high level in the myeloid cell line FDC-P2, and at a lower level in the pre-B lymphoid cell line WEHI-231 and the T hybridoma cell line HB21.7.31. Not expressed in the fibroblast cell line NIH3T3 or the erythroid cell line F5-5. Expressed in macrophages.

The protein localises to the cell membrane. The protein resides in the cell projection. It localises to the ruffle membrane. It is found in the cell junction. The catalysed reaction is O-phospho-L-tyrosyl-[protein] + H2O = L-tyrosyl-[protein] + phosphate. In terms of biological role, tyrosine phosphatase which dephosphorylates or contributes to the dephosphorylation of CTNND1, FLT3, PDGFRB, MET, KDR, LYN, SRC, MAPK1, MAPK3, EGFR, TJP1, OCLN, PIK3R1 and PIK3R2. Plays a role in cell adhesion, migration, proliferation and differentiation. Has a role in megakaryocytes and platelet formation. Involved in vascular development. May be involved in the mechanism of contact inhibition of cell growth. Regulator of macrophage adhesion and spreading. Positively affects cell-matrix adhesion. Positive regulator of platelet activation and thrombosis. Negative regulator of cell proliferation. Negative regulator of PDGF-stimulated cell migration; through dephosphorylation of PDGFR. Positive regulator of endothelial cell survival, as well as of VEGF-induced SRC and AKT activation; through KDR dephosphorylation. Negative regulator of EGFR signaling pathway; through EGFR dephosphorylation. Enhances the barrier function of epithelial junctions during reassembly. Negatively regulates T-cell receptor (TCR) signaling. Upon T-cell TCR activation, it is up-regulated and excluded from the immunological synapses, while upon T-cell-antigen presenting cells (APC) disengagement, it is no longer excluded and can dephosphorylate PLCG1 and LAT to down-regulate prolongation of signaling. The chain is Receptor-type tyrosine-protein phosphatase eta (Ptprj) from Mus musculus (Mouse).